The primary structure comprises 233 residues: Small ribosomal subunit protein uS3 (233 aa).

The KH type-2 domain maps to 39–107 (IRAFLKRKLY…DVNINIKEER (69 aa)). Basic and acidic residues predominate over residues 212–222 (MQPEKTEESAP). The tract at residues 212–233 (MQPEKTEESAPAKKSRRTRRGK) is disordered. Over residues 224–233 (KKSRRTRRGK) the composition is skewed to basic residues.

It belongs to the universal ribosomal protein uS3 family. As to quaternary structure, part of the 30S ribosomal subunit. Forms a tight complex with proteins S10 and S14.

Functionally, binds the lower part of the 30S subunit head. Binds mRNA in the 70S ribosome, positioning it for translation. The protein is Small ribosomal subunit protein uS3 of Campylobacter jejuni subsp. doylei (strain ATCC BAA-1458 / RM4099 / 269.97).